The chain runs to 196 residues: ECF RNA polymerase sigma factor SigM (196 aa).

The interval 39-105 is sigma-70 factor domain-2; the sequence is LFRRHHRQLH…ACLDRLRRAK (67 aa). An Interaction with polymerase core subunit RpoC motif is present at residues 63–66; that stretch reads DALQ. Residues 130-181 are sigma-70 factor domain-4; it reads AVQRALMRLPVEQRAAVVAVDMQGYSIADTARMLGVAEGTVKSRCARARARL. The segment at residues 156–175 is a DNA-binding region (H-T-H motif); it reads IADTARMLGVAEGTVKSRCA.

It belongs to the sigma-70 factor family. ECF subfamily. Interacts transiently with the RNA polymerase catalytic core formed by RpoA, RpoB, RpoC and RpoZ (2 alpha, 1 beta, 1 beta' and 1 omega subunit) to form the RNA polymerase holoenzyme that can initiate transcription. Interacts (via sigma-70 factor domain 4) with anti-sigma-M factor RsmA.

Functionally, sigma factors are initiation factors that promote the attachment of RNA polymerase to specific initiation sites and are then released. Extracytoplasmic function (ECF) sigma factors are held in an inactive form by an anti-sigma factor until released by regulated intramembrane proteolysis. The polypeptide is ECF RNA polymerase sigma factor SigM (sigM) (Mycobacterium tuberculosis (strain ATCC 35801 / TMC 107 / Erdman)).